We begin with the raw amino-acid sequence, 844 residues long: Janus kinase and microtubule-interacting protein 3 (844 aa).

Residues 8–259 (SRAKGDKAET…LSQAKEAERH (252 aa)) adopt a coiled-coil conformation. A disordered region spans residues 249 to 290 (QLSQAKEAERHPGSPRRELPYASGAGDASDHSGSPEQQLDEK). A compositionally biased stretch (basic and acidic residues) spans 254–267 (KEAERHPGSPRREL). Low complexity predominate over residues 270-282 (ASGAGDASDHSGS). Positions 289-421 (EKDARRFQLK…DELSKTLETA (133 aa)) form a coiled coil. Ser384 carries the post-translational modification Phosphoserine. The segment covering 466 to 483 (SDGSSISYQTDRTDQTPC) has biased composition (polar residues). The disordered stretch occupies residues 466-488 (SDGSSISYQTDRTDQTPCTPEDD). Coiled-coil stretches lie at residues 493–621 (MAKE…RERK) and 688–833 (EKWL…LFLF).

This sequence belongs to the JAKMIP family.

The protein resides in the golgi apparatus. The chain is Janus kinase and microtubule-interacting protein 3 (Jakmip3) from Mus musculus (Mouse).